A 263-amino-acid chain; its full sequence is Undecaprenyl-diphosphatase 2 (263 aa).

8 consecutive transmembrane segments (helical) span residues 15-37, 42-62, 83-103, 106-126, 142-162, 183-203, 216-236, and 242-262; these read GLTEFLPVSSTGHMILTGHLLGF, AKVFEVVIQLGSILAVVVIFW, LHIIIGMIPAGVLGVLFHSAI, VLFGPGPVVISLVAGGILMIV, ITYKQAFTIGMFQCLALWPGF, AEYTFILAVPMMVAASGLDLI, LFATGFITAFVVAMLAIVSFL, and VKLTPFAYYRFILAAVFYFFI.

The protein belongs to the UppP family.

It localises to the cell membrane. It catalyses the reaction di-trans,octa-cis-undecaprenyl diphosphate + H2O = di-trans,octa-cis-undecaprenyl phosphate + phosphate + H(+). Its function is as follows. Catalyzes the dephosphorylation of undecaprenyl diphosphate (UPP). Confers resistance to bacitracin. The polypeptide is Undecaprenyl-diphosphatase 2 (Bacillus cereus (strain ATCC 10987 / NRS 248)).